A 323-amino-acid polypeptide reads, in one-letter code: MNALPPAIFLMGPTAAGKTDLAIELTKVLPCELISVDSALVYRGMDIGTAKPSKTQLAEHPHRLIDILDPAQSYSAADFRSDALAAMAEITARGNIPLLVGGTMLYFKALLDGLADMPAADAQVRAQLEADAQAFGWQALHDQLAVVDPVSAARIHPNDPQRLIRALEVYRVSGMSMTAHREQQTAQSTEAAASGRQQLPYTVANLAIAPADRKVLHQRIALRFEQMLDQGFLDEVLALRSRGDLHSGLPSIRAVGYRQVWDHLDGKLTRDEMQERGIIATRQLAKRQFTWLRSWDDLHWLDSLASDNLSRALKYLGSVSILS.

12 to 19 (GPTAAGKT) lines the ATP pocket. 14-19 (TAAGKT) provides a ligand contact to substrate. Interaction with substrate tRNA stretches follow at residues 37–40 (DSAL) and 161–165 (QRLIR).

The protein belongs to the IPP transferase family. Monomer. Requires Mg(2+) as cofactor.

It catalyses the reaction adenosine(37) in tRNA + dimethylallyl diphosphate = N(6)-dimethylallyladenosine(37) in tRNA + diphosphate. Catalyzes the transfer of a dimethylallyl group onto the adenine at position 37 in tRNAs that read codons beginning with uridine, leading to the formation of N6-(dimethylallyl)adenosine (i(6)A). In Pseudomonas syringae pv. syringae (strain B728a), this protein is tRNA dimethylallyltransferase.